Reading from the N-terminus, the 5412-residue chain is Mucin-4 (5412 aa).

A signal peptide spans 1 to 28; the sequence is MKGARWRRVPWVSLSCLCLCLLPHVVPG. Disordered regions lie at residues 40–87 and 142–249; these read TAAP…TTSK and TSTD…ATSS. The interval 43–4241 is variable number of tandem repeats (VNTR); sequence PVTSTGSTTA…SVSTGHATPL (4199 aa). A compositionally biased stretch (low complexity) spans 142–163; sequence TSTDSTLGNTEETSTAGTESST. Residues Thr154 and Thr156 are each glycosylated (O-linked (GalNAc...) threonine). Positions 164 to 199 are enriched in polar residues; it reads PVTSAVSITAGQEGQSRTTSWRTSIQDTSASSQNHW. Low complexity predominate over residues 200-223; that stretch reads TRSTQTTRESQTSTLTHRTTSTPS. Positions 224–249 are enriched in polar residues; that stretch reads FSPSVHNVTGTVSQKTSPSGETATSS. Asn230 carries an N-linked (GlcNAc...) asparagine glycan. The O-linked (GalNAc...) threonine glycan is linked to Thr234. A glycan (N-linked (GlcNAc...) asparagine) is linked at Asn255. Polar residues-rich tracts occupy residues 267-285, 306-328, and 358-367; these read TTST…SVPV, SPAT…HQTQ, and GFNPSGTVSQ. Disordered stretches follow at residues 267-286, 303-328, 353-383, 438-473, 488-580, 592-853, 868-963, 983-1864, 1878-2078, 2111-2220, 2232-2814, 2837-3306, 3320-3580, 3592-3644, 3656-3756, and 3769-4223; these read TTST…VPVT, EGQS…HQTQ, LSSP…PSSV, LSPS…SFSP, WPSS…ALLS, TATS…ASAS, VPGT…SGSG, SSAS…DASS, ASSV…TGHA, TALH…ASTG, SAST…TGHA, IPSS…SSVS, SAST…VSTG, SVST…VSTG, SVST…ASTG, and VSTG…GHAT. O-linked (GalNAc...) threonine glycans are attached at residues Thr364, Thr369, and Thr376. Low complexity predominate over residues 368–383; sequence ETFPSGETTTSSPSSV. 3 stretches are compositionally biased toward polar residues: residues 450-459, 488-526, and 546-557; these read AFHTQQSEGA, WPSS…TGTA, and TTYSSHSTTLPK. Composition is skewed to low complexity over residues 558-577 and 615-627; these read TTGA…TGEA and STNH…TSTS. N-linked (GlcNAc...) asparagine glycosylation is present at Asn617. O-linked (GalNAc...) threonine glycosylation is found at Thr620, Thr666, and Thr688. Residues 628-677 are compositionally biased toward polar residues; sequence PQESPAVSQRGHTQAPQTTQESQTTRSVSPMTDTKTVTTPGSSFTASGHS. The span at 705-717 shows a compositional bias: low complexity; that stretch reads TTQAPTTALQAAP. Positions 729-746 are enriched in polar residues; the sequence is GTSLSKTGALTLANSVVS. Thr747 is a glycosylation site (O-linked (GalNAc...) threonine). Low complexity predominate over residues 756–771; it reads TSASASTSPDTAAAMT. A compositionally biased stretch (polar residues) spans 772-789; sequence HTHQAESTEASGQTQTSE. The segment covering 790-828 has biased composition (low complexity); that stretch reads PASSGSRTTSAGTATPSSSGASGTTPSGSEGISTSGETT. Residues Thr797, Thr798, Thr802, Thr804, Thr813, and Thr814 are each glycosylated (O-linked (GalNAc...) threonine). A compositionally biased stretch (polar residues) spans 829–852; that stretch reads RFSSNPSRDSHTTQSTTELLSASA. Residues Thr881, Thr886, and Thr892 are each glycosylated (O-linked (GalNAc...) threonine). Residues 885-903 show a composition bias toward low complexity; sequence PTGQSSPTSPSASPQETAA. Residues 907-928 show a composition bias toward polar residues; the sequence is MAQTQRTRTSRGSDTISLASQA. The segment covering 929-950 has biased composition (low complexity); sequence TDTFSTVPPTPPSITSTGLTSP. Residues Thr931, Thr934, Thr938, Thr943, Thr945, Thr948, Thr952, Thr954, Thr1003, Thr1007, Thr1012, Thr1019, Thr1022, Thr1023, Thr1028, Thr1030, Thr1035, Thr1039, Thr1044, Thr1051, Thr1055, Thr1060, Thr1062, Thr1067, Thr1071, Thr1076, Thr1083, Thr1086, Thr1087, Thr1092, Thr1094, Thr1099, Thr1103, Thr1108, Thr1110, Thr1115, Thr1118, Thr1119, Thr1124, Thr1126, Thr1131, Thr1135, Thr1172, Thr1179, Thr1182, Thr1183, Thr1188, Thr1195, Thr1199, Thr1204, Thr1236, Thr1243, Thr1246, and Thr1247 are each glycosylated (O-linked (GalNAc...) threonine). Polar residues predominate over residues 951 to 963; sequence QTETHTLSPSGSG. Residues 1007–1024 are compositionally biased toward low complexity; sequence TPLPVTSPSSVSTGHTTP. Polar residues predominate over residues 1028–1054; the sequence is TDTSSESTGHVTPLPVTSFSSASTGDS. Positions 1060–1086 are enriched in polar residues; the sequence is TDTSSASTGHVTPLPVTSLSSASTGDT. Residues 1092 to 1118 show a composition bias toward polar residues; that stretch reads TDTSSASTGHATSLPVTDTSSVSTGHT. Composition is skewed to polar residues over residues 1124-1150 and 1157-1197; these read TDTS…TGHT and DASS…STGH. 2 stretches are compositionally biased toward polar residues: residues 1204 to 1213 and 1221 to 1246; these read TDTSSASTGH and DASS…TGHT. The segment covering 1252 to 1262 has biased composition (polar residues); it reads TDTSSASTGQA. Residues 1263–1279 show a composition bias toward low complexity; that stretch reads TSLLVTDTSSVSTGDTT. Thr1278, Thr1279, Thr1284, Thr1286, Thr1291, Thr1295, Thr1300, Thr1307, Thr1311, Thr1316, Thr1323, Thr1326, Thr1332, Thr1339, Thr1342, Thr1343, and Thr1348 each carry an O-linked (GalNAc...) threonine glycan. The span at 1281-1325 shows a compositional bias: polar residues; it reads LPVTSTSSASTGHVTPLHVTSPSSASTGHATPLPVTSLSSASTGD. Polar residues predominate over residues 1332-1342; that stretch reads TSPSSASTGDT. Composition is skewed to polar residues over residues 1349–1358 and 1365–1405; these read DASSVSTGHT and DASS…STGH. Thr1380, Thr1387, Thr1390, Thr1391, Thr1396, Thr1403, Thr1407, Thr1412, Thr1444, Thr1451, Thr1454, and Thr1455 each carry an O-linked (GalNAc...) threonine glycan. 2 stretches are compositionally biased toward polar residues: residues 1412 to 1421 and 1429 to 1454; these read TDTSSASTGH and DASS…TGHT. Polar residues predominate over residues 1460 to 1470; that stretch reads TDTSSASTGQA. Residues 1471 to 1487 are compositionally biased toward low complexity; it reads TSLLVTDTSSVSTGDTT. 36 O-linked (GalNAc...) threonine glycosylation sites follow: Thr1486, Thr1487, Thr1492, Thr1494, Thr1499, Thr1503, Thr1508, Thr1515, Thr1519, Thr1524, Thr1531, Thr1534, Thr1540, Thr1547, Thr1550, Thr1551, Thr1556, Thr1563, Thr1566, Thr1567, Thr1572, Thr1579, Thr1582, Thr1583, Thr1588, Thr1590, Thr1598, Thr1599, Thr1604, Thr1611, Thr1614, Thr1615, Thr1620, Thr1622, Thr1627, and Thr1630. Over residues 1489-1533 the composition is skewed to polar residues; that stretch reads LPVTSTSSASTGHVTPLHVTSPSSASTGHATPLPVTSLSSASTGD. The segment covering 1540–1550 has biased composition (polar residues); the sequence is TSPSSASTGDT. The segment covering 1557-1582 has biased composition (polar residues); sequence DASSVSTGHTTPLPVTSPSSASTGHT. The span at 1588-1614 shows a compositional bias: polar residues; sequence TDTSSASKGDTTPLPVTSPSSASTGHT. Low complexity predominate over residues 1620 to 1631; it reads TDTSSASTGDTT. Polar residues predominate over residues 1633 to 1661; that stretch reads LPVTNASSLSTGHATPLHVTSPSSASTGH. Asn1637 carries an N-linked (GlcNAc...) asparagine glycan. 24 O-linked (GalNAc...) threonine glycosylation sites follow: Thr1659, Thr1663, Thr1668, Thr1670, Thr1675, Thr1679, Thr1716, Thr1723, Thr1726, Thr1727, Thr1732, Thr1764, Thr1766, Thr1812, Thr1819, Thr1822, Thr1823, Thr1828, Thr1835, Thr1838, Thr1839, Thr1844, Thr1854, and Thr1855. Positions 1668–1679 are enriched in low complexity; it reads TSTSSASTGHAT. Polar residues-rich tracts occupy residues 1701-1741, 1749-1773, and 1812-1822; these read DVSS…STGH, DASS…STAH, and TSPSSASTGDT. The segment covering 1828 to 1840 has biased composition (low complexity); the sequence is TDASSASTGDTTS. 3 stretches are compositionally biased toward polar residues: residues 1841–1864, 1892–1902, and 1909–1950; these read LPVT…DASS, TDTNSASTGDT, and DASS…SGHT. Residues Thr1931, Thr1934, Thr1935, Thr1940, Thr1950, Thr1951, Thr1956, Thr1963, Thr1995, Thr1999, Thr2004, Thr2006, Thr2015, Thr2020, Thr2027, Thr2030, Thr2031, Thr2036, Thr2038, Thr2047, Thr2052, Thr2062, Thr2063, Thr2132, Thr2137, Thr2139, Thr2142, Thr2143, Thr2148, Thr2150, Thr2155, Thr2159, Thr2164, Thr2180, Thr2182, Thr2187, Thr2191, Thr2196, Thr2198, Thr2203, Thr2207, Thr2244, Thr2254, and Thr2255 are each glycosylated (O-linked (GalNAc...) threonine). A compositionally biased stretch (polar residues) spans 1957–1981; sequence DASSVPTGHATSLPVTDASSVSTGH. Polar residues predominate over residues 2004-2030; that stretch reads TDTSSVSTGQATPLPVTSLSSASTGDT. The span at 2036–2077 shows a compositional bias: polar residues; the sequence is TDTSSASTGQDTPLPVTSLSSVSTGDTTPLPVTNPSSASTGH. Residues 2125–2146 show a composition bias toward low complexity; that stretch reads DTTPLPVTSPSSTSTGDTTPLP. The segment covering 2148-2189 has biased composition (polar residues); it reads TETSSVSTGHATSLPVTDTSSASTGHATSLPVTDTSSASTGH. Composition is skewed to polar residues over residues 2196 to 2219 and 2232 to 2254; these read TDTS…SAST and SAST…TGDT. A compositionally biased stretch (polar residues) spans 2261–2270; it reads DASSVSTGHA. Residues 2271 to 2283 show a composition bias toward low complexity; it reads TSLPVTSLSSVST. O-linked (GalNAc...) threonine glycans are attached at residues Thr2283, Thr2286, Thr2287, Thr2292, Thr2299, Thr2303, Thr2308, Thr2324, Thr2331, Thr2334, Thr2335, Thr2340, Thr2347, Thr2351, Thr2356, Thr2363, Thr2366, Thr2367, Thr2372, Thr2382, Thr2383, Thr2388, Thr2395, Thr2398, Thr2399, and Thr2406. Residues 2284–2301 show a composition bias toward polar residues; that stretch reads GDTTPLPVTSPSSASTGH. Polar residues predominate over residues 2309–2349; sequence DASSASTGHATPLPVTSLSSASTGDTTPLPVTSPSSASTGH. Positions 2366-2399 are enriched in low complexity; that stretch reads TTPLPVTSSSSASSGHTTPLPVTDASSASTGDTT. 2 stretches are compositionally biased toward polar residues: residues 2404–2413 and 2421–2445; these read TDTSSASTGH and GLSS…STGH. N-linked (GlcNAc...) asparagine glycosylation occurs at Asn2437. O-linked (GalNAc...) threonine glycosylation is found at Thr2452, Thr2454, Thr2459, Thr2462, Thr2463, Thr2468, Thr2500, Thr2507, Thr2510, Thr2511, Thr2516, Thr2518, Thr2523, and Thr2526. Residues 2452 to 2471 are compositionally biased toward low complexity; it reads TSTSSASTGDTTPLPGTDTS. Positions 2485–2510 are enriched in polar residues; it reads DASSVSTGDTTRLPVTSPSSASTGHT. Positions 2517–2573 are enriched in polar residues; that stretch reads DTPSASTGDTTPLPVTNASSLSTRHATSLHVTSPSSASTGHATSLPVTDTSAASTGH. A glycan (N-linked (GlcNAc...) asparagine) is linked at Asn2533. Residues Thr2564, Thr2566, Thr2571, Thr2575, Thr2580, Thr2582, Thr2587, Thr2590, Thr2591, Thr2596, Thr2598, Thr2619, Thr2622, Thr2623, Thr2628, Thr2660, Thr2667, Thr2670, Thr2671, Thr2676, Thr2683, Thr2687, Thr2692, and Thr2694 are each glycosylated (O-linked (GalNAc...) threonine). Positions 2580–2591 are enriched in low complexity; it reads TSTSSASTGDTT. 2 stretches are compositionally biased toward polar residues: residues 2597–2637 and 2645–2691; these read DTYS…STGH and DASS…SLPV. Positions 2692–2704 are enriched in low complexity; it reads TDTSSASTGDTTS. Positions 2705 to 2723 are enriched in polar residues; it reads LPVTDTSSAYTGDTTSLPV. Residues 2724 to 2735 show a composition bias toward low complexity; it reads TDTSSSSTGDTT. 8 O-linked (GalNAc...) threonine glycosylation sites follow: Thr2740, Thr2742, Thr2750, Thr2751, Thr2756, Thr2758, Thr2763, and Thr2767. Positions 2740-2750 are enriched in polar residues; that stretch reads TETSSVSTGDT. The span at 2756 to 2798 shows a compositional bias: polar residues; the sequence is TDTSSASTGHATPLPVTNTSSVSTGHATPLHVTSPSSASTGHT. Asn2773 carries N-linked (GlcNAc...) asparagine glycosylation. Residues Thr2779, Thr2783, Thr2788, Thr2795, Thr2798, Thr2799, and Thr2804 are each glycosylated (O-linked (GalNAc...) threonine). 2 stretches are compositionally biased toward polar residues: residues 2805-2814 and 2837-2846; these read DASSVSTGHA and IPSSASSGHT. O-linked (GalNAc...) threonine glycans are attached at residues Thr2846, Thr2847, and Thr2852. The segment covering 2853 to 2877 has biased composition (polar residues); the sequence is DASSVSTGHATSLPVTDASSVSTGH. Residues 2895–2907 are compositionally biased toward low complexity; sequence TPLPLTSLSSVST. Residues Thr2910, Thr2911, Thr2916, Thr2918, Thr2923, Thr2927, Thr2932, Thr2939, Thr2942, Thr2943, Thr2948, Thr2950, Thr2955, Thr2959, Thr2966, Thr2971, and Thr2975 are each glycosylated (O-linked (GalNAc...) threonine). The segment covering 2916 to 2942 has biased composition (polar residues); it reads TDTSSASTGQATPLPVTSLSSVSTGDT. The span at 2948-2973 shows a compositional bias: polar residues; that stretch reads TDTSSASTGHATSLPVTDTSSASTGH. 2 stretches are compositionally biased toward polar residues: residues 2980–2989 and 3009–3037; these read TDTSSASTGH and LPVT…STGH. O-linked (GalNAc...) threonine glycosylation is found at Thr3023, Thr3028, Thr3035, and Thr3039. The segment covering 3044–3069 has biased composition (polar residues); the sequence is TDTSSASTGHANPLHVTSPSSASTGH. O-linked (GalNAc...) threonine glycans are attached at residues Thr3071, Thr3076, Thr3078, Thr3083, Thr3087, Thr3092, Thr3099, Thr3102, Thr3103, Thr3108, Thr3115, Thr3118, Thr3119, Thr3124, Thr3126, Thr3131, Thr3135, Thr3140, Thr3142, Thr3147, Thr3150, Thr3151, Thr3156, Thr3158, Thr3163, Thr3167, Thr3172, Thr3179, Thr3182, Thr3183, Thr3188, Thr3220, Thr3227, Thr3230, Thr3231, Thr3236, Thr3243, Thr3247, Thr3252, and Thr3254. Residues 3076–3118 are compositionally biased toward polar residues; that stretch reads TDTSSASTGHATPLPVTSLSSVSTGDTTPLPVTSPSSASTGHT. Positions 3124–3134 are enriched in polar residues; the sequence is TDTSSASTGQA. The span at 3140 to 3151 shows a compositional bias: low complexity; it reads TSTSSASTGDTT. Polar residues-rich tracts occupy residues 3156 to 3197 and 3205 to 3251; these read TDTS…STGH and DASS…SLPV. The span at 3252-3264 shows a compositional bias: low complexity; that stretch reads TDTSSASTGDTTS. Residues 3265–3283 are compositionally biased toward polar residues; it reads LPVTDTSSAYTGDTTSLPV. Low complexity predominate over residues 3284 to 3295; that stretch reads TDTSSSSTGDTT. 9 O-linked (GalNAc...) threonine glycosylation sites follow: Thr3294, Thr3332, Thr3339, Thr3342, Thr3343, Thr3348, Thr3350, Thr3355, and Thr3359. A compositionally biased stretch (polar residues) spans 3320 to 3337; sequence SASTGHATPLHVTSPSSA. Positions 3338-3356 are enriched in low complexity; sequence STGDTTPVPVTDTSSVSTG. Composition is skewed to polar residues over residues 3365 to 3374 and 3381 to 3405; these read GLSSASTGDT and DISS…STGD. Asn3397 is a glycosylation site (N-linked (GlcNAc...) asparagine). O-linked (GalNAc...) threonine glycosylation is found at Thr3398, Thr3403, Thr3406, Thr3412, Thr3419, Thr3423, Thr3428, Thr3430, Thr3435, Thr3439, and Thr3444. Residues 3412 to 3421 are compositionally biased toward polar residues; the sequence is TSPSSASTGH. Residues 3428-3471 are compositionally biased toward low complexity; the sequence is TSTSSASTGHATPVPVTSTSSASTGHTTPLPVTDTSSASTGDTT. Ser3445 carries O-linked (GalNAc...) serine glycosylation. Residues Thr3446, Thr3451, Thr3454, Thr3455, Thr3460, Thr3462, Thr3467, Thr3470, Thr3471, Thr3476, Thr3483, Thr3486, Thr3487, Thr3492, Thr3499, Thr3502, Thr3504, Thr3508, Thr3515, Thr3519, Thr3524, Thr3526, Thr3531, Thr3535, Thr3540, Thr3547, Thr3550, Thr3551, Thr3556, Thr3567, Thr3614, Thr3615, Thr3622, Thr3678, Thr3679, Thr3686, Thr3691, Thr3695, Thr3700, Thr3710, Thr3711, Thr3716, Thr3718, Thr3723, Thr3727, Thr3732, Thr3739, Thr3743, Thr3748, Thr3780, Thr3787, Thr3790, Thr3791, Thr3796, Thr3798, Thr3803, Thr3807, Thr3812, Thr3822, Thr3823, Thr3828, Thr3835, Thr3839, Thr3844, Thr3851, Thr3854, Thr3860, Thr3867, Thr3871, Thr3876, Thr3883, Thr3886, Thr3887, Thr3892, Thr3894, Thr3899, Thr3903, Thr3935, Thr3940, Thr3942, Thr3947, Thr3950, Thr3951, Thr3956, Thr3958, Thr3963, Thr3967, Thr3972, Thr3979, Thr3983, Thr3988, Thr3990, Thr3995, Thr3999, Thr4004, Thr4006, Thr4011, Thr4015, and Thr4020 are each glycosylated (O-linked (GalNAc...) threonine). Positions 3473–3486 are enriched in polar residues; that stretch reads LPVTSPSSASTGHT. Residues 3493–3517 are compositionally biased toward polar residues; the sequence is IPSSASTGDTSTLPVTGASSASTGH. The span at 3524-3550 shows a compositional bias: polar residues; sequence TDTSSVSTGHATPLPVTSLSSVSTGDT. A compositionally biased stretch (polar residues) spans 3557 to 3580; that stretch reads DASSASTGQATPLPVTSLSSVSTG. Low complexity predominate over residues 3604-3615; sequence TDTSSASTGDTT. The segment covering 3620–3644 has biased composition (polar residues); sequence TDTSSASTGQATPLPVTSLSSVSTG. A compositionally biased stretch (low complexity) spans 3668–3679; sequence TDTSSASTGDTT. The segment covering 3684–3694 has biased composition (polar residues); the sequence is TDTSSASTGQA. A compositionally biased stretch (low complexity) spans 3710-3728; the sequence is TTPLPVTSTSSVSTGHVTP. Over residues 3730-3741 the composition is skewed to polar residues; it reads HVTSPSSASTGH. A compositionally biased stretch (low complexity) spans 3780 to 3791; sequence TDASSASTGDTT. The span at 3796-3822 shows a compositional bias: polar residues; that stretch reads TDTSSASTGQATPLPVTSLSSVSTGDT. Residues 3860–3869 are compositionally biased toward polar residues; the sequence is TSPSSASTGH. The span at 3877–3886 shows a compositional bias: polar residues; that stretch reads GLSSASTGDT. Residues 3892–3901 show a composition bias toward polar residues; that stretch reads TDTSSASTRH. Residues 3940–3951 are compositionally biased toward low complexity; the sequence is TSTSSASTGDTT. Over residues 3956 to 3981 the composition is skewed to polar residues; the sequence is TDTSSVSTGHATSLPVTSRSSASTGH. Residues 3988 to 3997 are compositionally biased toward polar residues; the sequence is TDTSSVSTGH. Low complexity predominate over residues 3999 to 4011; sequence TPLPVTSTSSVST. Polar residues predominate over residues 4018 to 4029; the sequence is PVTSPSSASTGH. O-linked (GalNAc...) serine glycans are attached at residues Ser4021, Ser4023, Ser4024, and Ser4026. Thr4027, Thr4031, and Thr4036 each carry an O-linked (GalNAc...) threonine glycan. Residues 4030 to 4047 show a composition bias toward low complexity; it reads ATPVPVTSTSSASTGDTT. Residue Ser4037 is glycosylated (O-linked (GalNAc...) serine). 4 O-linked (GalNAc...) threonine glycosylation sites follow: Thr4038, Thr4043, Thr4046, and Thr4047. The span at 4049 to 4093 shows a compositional bias: polar residues; the sequence is LPVTNASSLSTGHATPLHVTSPSSASRGDTSTLPVTDASSASTGH. Asn4053 is a glycosylation site (N-linked (GlcNAc...) asparagine). Residues Thr4078 and Thr4084 are each glycosylated (O-linked (GalNAc...) threonine). The span at 4095–4107 shows a compositional bias: low complexity; sequence TPLPLTSLSSVST. O-linked (GalNAc...) threonine glycans are attached at residues Thr4110, Thr4111, Thr4116, Thr4118, Thr4123, Thr4127, Thr4132, Thr4139, Thr4142, Thr4143, Thr4148, Thr4158, Thr4159, Thr4164, Thr4171, Thr4175, Thr4180, Thr4182, Thr4187, Thr4190, Thr4191, Thr4196, Thr4198, Thr4203, Thr4207, Thr4212, Thr4214, Thr4219, Thr4223, and Thr4239. Over residues 4116-4142 the composition is skewed to polar residues; it reads TDTSSASTGQATPLPVTSLSSVSTGDT. Over residues 4149–4173 the composition is skewed to polar residues; the sequence is IPSSASSGHTTSLPVTDASSVSTGH. Positions 4180 to 4191 are enriched in low complexity; sequence TSTSSASTGDTT. A compositionally biased stretch (polar residues) spans 4196 to 4205; the sequence is TDTSSASTGH. Positions 4212–4223 are enriched in polar residues; that stretch reads TDTSSASTGHAT. Positions 4242 to 4254 are enriched in low complexity; it reads AVSSATSASTVSS. The tract at residues 4242-4288 is disordered; sequence AVSSATSASTVSSDSPLKMETPGMTTPSLKTDGGRRTATSPPPTTSQ. O-linked (GalNAc...) threonine glycosylation is found at Thr4272, Thr4278, Thr4280, Thr4289, Thr4293, and Thr4297. The NIDO domain occupies 4397-4552; the sequence is PFWDDADFST…GLQFYRLHRE (156 aa). The region spanning 4553–4668 is the AMOP domain; the sequence is ERPNYRLECL…YLCALYQQRR (116 aa). The region spanning 4680–4880 is the VWFD domain; sequence QPAWMFGDPH…TWQINGTGLL (201 aa). Residues Asn4715, Asn4768, Asn4787, Asn4796, Asn4831, Asn4852, Asn4875, Asn4902, Asn4928, Asn4946, Asn4982, Asn4997, Asn5045, Asn5052, Asn5100, and Asn5119 are each glycosylated (N-linked (GlcNAc...) asparagine). One can recognise an EGF-like 1 domain in the interval 5118-5157; sequence QNQSCPVNYCYNQGHCYISQTLGCQPMCTCPPAFTDSRCF. Cystine bridges form between Cys5122–Cys5133, Cys5127–Cys5145, and Cys5147–Cys5156. Asn5185, Asn5192, and Asn5292 each carry an N-linked (GlcNAc...) asparagine glycan. In terms of domain architecture, EGF-like 2 spans 5321–5360; the sequence is VSPCSRGYCDHGGQCQHLPSGPRCSCVSFSIYTAWGEHCE. Cystine bridges form between Cys5324/Cys5335, Cys5329/Cys5344, and Cys5346/Cys5359. A helical membrane pass occupies residues 5369 to 5389; that stretch reads FFGIFFGALGGLLLLGVGTFV.

A heterodimeric complex, composed of a mucin-4 alpha chain and a cysteine-rich transmembrane mucin-4 beta chain. Mucin-4 beta chain interacts with ERBB2 via the EGF-like domain 1. In nonpolarized cells, associates with ERBB2 and ERBB3. Post-translationally, proteolytically cleaved into 2 chains, mucin-4 alpha chain and mucin-4 beta chain. Highly O-glycosylated. In terms of processing, is predominantly N-glycosylated. As to expression, expressed in the thymus, thyroid, lung, trachea, esophagus, stomach, small intestine, colon, testis, prostate, ovary, uterus, placenta, and mammary and salivary glands. Expressed in carcinomas arising from some of these epithelia, such as lung cancers, squamous cell carcinomas of the upper aerodigestive tract, mammary carcinomas, biliary tract, colon, and cervix cancers. Minimally or not expressed in the normal pancreas or chronic pancreatitis, but is highly expressed in pancreatic tumors and pancreatic tumor cell lines.

It localises to the cell membrane. The protein resides in the secreted. Functionally, membrane-bound mucin, a family of highly glycosylated proteins that constitute the major component of the mucus, the slimy and viscous secretion covering epithelial surfaces. These glycoproteins play important roles in the protection of the epithelium and are implicated in epithelial renewal and differentiation. Regulates cellular behavior through both anti-adhesive effects on cell-cell and cell-extracellular matrix interactions and its ability to act as an intramembrane ligand for ERBB2. Plays an important role in proliferation and differentiation of epithelial cells by inducing specific phosphorylation of ERBB2. In polarized epithelial cells, segregates ERBB2 and other ERBB receptors and prevents ERBB2 from acting as a coreceptor. The interaction with ERBB2 leads to enhanced expression of CDKN1B. The formation of a MUC4-ERBB2-ERBB3-NRG1 complex leads to down-regulation of CDKN1B, resulting in repression of apoptosis and stimulation of proliferation. Its ability to promote tumor growth may be mainly due to repression of apoptosis as opposed to proliferation. The polypeptide is Mucin-4 (MUC4) (Homo sapiens (Human)).